The following is a 174-amino-acid chain: RNA pyrophosphohydrolase (174 aa).

The region spanning 6–149 (GFRANVGIII…KRDVYRKVMK (144 aa)) is the Nudix hydrolase domain. The short motif at 38-59 (GGVDDGESAEEAMYRELYEEVG) is the Nudix box element.

It belongs to the Nudix hydrolase family. RppH subfamily. It depends on a divalent metal cation as a cofactor.

Its function is as follows. Accelerates the degradation of transcripts by removing pyrophosphate from the 5'-end of triphosphorylated RNA, leading to a more labile monophosphorylated state that can stimulate subsequent ribonuclease cleavage. This is RNA pyrophosphohydrolase from Shewanella sp. (strain W3-18-1).